The sequence spans 494 residues: Cardiolipin synthase (494 aa).

The next 2 membrane-spanning stretches (helical) occupy residues 14–34 (IILN…AFTI) and 45–65 (IWAW…LYLL). 2 consecutive PLD phosphodiesterase domains span residues 229–256 (MNNR…GDEY) and 407–434 (DNGF…DHRS). Residues His-234, Lys-236, Asp-241, His-412, Lys-414, and Asp-419 contribute to the active site.

This sequence belongs to the phospholipase D family. Cardiolipin synthase subfamily.

It localises to the cell membrane. The enzyme catalyses 2 a 1,2-diacyl-sn-glycero-3-phospho-(1'-sn-glycerol) = a cardiolipin + glycerol. Its function is as follows. Catalyzes the reversible phosphatidyl group transfer from one phosphatidylglycerol molecule to another to form cardiolipin (CL) (diphosphatidylglycerol) and glycerol. In Staphylococcus aureus (strain Mu50 / ATCC 700699), this protein is Cardiolipin synthase (cls).